The primary structure comprises 231 residues: Protein PIMREG (231 aa).

A disordered region spans residues 1–44 (MASQWQGMRTSVRRRSLLKEEQLEKKEVTRSAGGHPETGPLGSL). A phosphoserine mark is found at Ser-11 and Ser-16. 2 consecutive short sequence motifs (D-box) follow at residues 14–17 (RRSL) and 53–56 (PLRA). The segment covering 17-29 (LLKEEQLEKKEVT) has biased composition (basic and acidic residues). A Phosphoserine modification is found at Ser-72. Disordered stretches follow at residues 115-138 (KVRR…QKNT) and 152-197 (HLRL…DLEP). Phosphoserine; by Uhmk1; in vitro is present on Ser-128. Residues 178-190 (PCSSTEPLCSPSE) are compositionally biased toward polar residues. Phosphoserine is present on residues Ser-191 and Ser-193.

In terms of assembly, interacts with PICALM; this interaction may target PICALM to the nucleus. During mitosis, associates with HDAC2 and MTA2 subunits of the chromatin-remodeling NuRD complex; this association is strongest at prometaphase and decreases as the cell progresses through metaphase and anaphase. Ubiquitinated by the anaphase-promoting complex/cyclosome (APC/C) complex in the presence of FZR1, leading to its degradation by the proteasome during mitotic exit. However, degradation is not essential for normal mitotic progression within a single cell cycle. As to expression, mainly expressed in thymus and ovary. Expressed in all T-cell subpopulations isolated from the thymus, macrophages, pro-erythrocytes, granulocytes, mast cells and progenitor cells.

It is found in the nucleus. The protein resides in the nucleolus. During mitosis, may play a role in the metaphase-to-anaphase transition. The protein is Protein PIMREG of Mus musculus (Mouse).